The sequence spans 912 residues: Putative respiratory burst oxidase homolog protein J (912 aa).

Disordered regions lie at residues 1 to 51 and 73 to 112; these read MKNN…GGGI and WRKS…RTTS. Residues 1 to 323 are Cytoplasmic-facing; sequence MKNNKKVGTE…VVVTAELMYE (323 aa). Polar residues-rich tracts occupy residues 29 to 44 and 78 to 87; these read SVKQ…NPES and NLGSPSTRKS. 2 EF-hand-like regions span residues 147–155 and 181–193; these read AVDGRLPKD and RQIK…DKEQ. In terms of domain architecture, EF-hand spans 205 to 240; that stretch reads DLDCRLQIFFDMCDKDGDGKLTEEEVKEVIVLSASA. Ca(2+) contacts are provided by D218, D220, D222, K224, and E229. A Phosphoserine modification is found at S294. Residues 324 to 344 traverse the membrane as a helical segment; sequence HWKKIWVVTLWLAVNVVLFMW. Residues 345 to 363 are Extracellular-facing; the sequence is KYEEFTTSPLYNITGRCLC. A helical transmembrane segment spans residues 364 to 384; the sequence is AAKGTAEILKLNMALILVPVL. A Ferric oxidoreductase domain is found at 366–523; that stretch reads KGTAEILKLN…LLVIAYALLI (158 aa). The Cytoplasmic segment spans residues 385 to 410; that stretch reads RRTLTFLRSTFLNHLIPFDDNINFHK. A helical membrane pass occupies residues 411-431; that stretch reads LIAVAIAVISLLHTALHMLCN. The Extracellular portion of the chain corresponds to 432–458; it reads YPRLSSCPYNFYSDYAGNLLGAKQPTY. Residues 459–479 form a helical membrane-spanning segment; sequence LGLMLTPVSVTGVLMIIFMGI. The Cytoplasmic segment spans residues 480–510; that stretch reads SFTLAMHYFRRNIVKLPIPFNRLAGFNSFWY. Residues 511-531 traverse the membrane as a helical segment; it reads AHHLLVIAYALLIIHGYILII. Residues 532–697 are Extracellular-facing; it reads EKPWYQKTTW…PYGAPAQSYQ (166 aa). The FAD-binding FR-type domain maps to 562–695; sequence EHNHRVHIIK…KGPYGAPAQS (134 aa). Residues 698–718 traverse the membrane as a helical segment; the sequence is KFDILLLIGLGIGATPFISIL. At 719–912 the chain is on the cytoplasmic side; it reads KDMLNNLKPG…TRFTFHKENF (194 aa).

Belongs to the RBOH (TC 5.B.1.3) family. As to quaternary structure, monomer and homodimer.

It is found in the membrane. In terms of biological role, calcium-dependent NADPH oxidase that generates superoxide. This is Putative respiratory burst oxidase homolog protein J (RBOHJ) from Arabidopsis thaliana (Mouse-ear cress).